We begin with the raw amino-acid sequence, 666 residues long: DEAD-box ATP-dependent RNA helicase 30 (666 aa).

The interval 53 to 102 (PDPNLPRRLPFPSSSSTPTAAAPPDSGEPSRARARTETYRTGDMNPYDLR) is disordered. Residues 64-76 (PSSSSTPTAAAPP) are compositionally biased toward low complexity. A compositionally biased stretch (basic and acidic residues) spans 80–92 (EPSRARARTETYR). Residues 251–279 (RYFQEANFPDYCMQAIAKSGFVEPTPIQS) carry the Q motif motif. The Helicase ATP-binding domain occupies 282-457 (WPMALKGRDM…RQFLQNPYKV (176 aa)). ATP is bound at residue 295–302 (AQTGSGKT). The DEAD box motif lies at 405 to 408 (DEAD). Positions 485-630 (RLSKLLSDLM…VVNPALESMA (146 aa)) constitute a Helicase C-terminal domain. Residues 632–666 (SASSMGGGNFRSRGRGGFGNRSGSNSIPIRGRRPY) are disordered. The segment covering 636–651 (MGGGNFRSRGRGGFGN) has biased composition (gly residues).

This sequence belongs to the DEAD box helicase family. DDX5/DBP2 subfamily.

The protein localises to the nucleus. The catalysed reaction is ATP + H2O = ADP + phosphate + H(+). Its function is as follows. ATP-dependent RNA helicase involved nonsense-mediated mRNA decay and ribosome biogenesis through rRNA processing. This Oryza sativa subsp. japonica (Rice) protein is DEAD-box ATP-dependent RNA helicase 30.